The chain runs to 163 residues: Troponin C, skeletal muscle (163 aa).

Position 2 is a blocked amino end (Ala) (alanine 2). 4 consecutive EF-hand domains span residues 18–53 (EMIA…LGQN), 54–89 (PTKE…QMKE), 94–129 (KSEE…TGEH), and 130–163 (VTEE…EGVQ). Ca(2+)-binding residues include aspartate 31, aspartate 33, aspartate 37, glutamate 42, aspartate 67, aspartate 69, serine 71, threonine 73, glutamate 78, aspartate 107, asparagine 109, aspartate 111, glutamate 118, aspartate 143, asparagine 145, aspartate 147, arginine 149, and glutamate 154.

It belongs to the troponin C family.

Its function is as follows. Troponin is the central regulatory protein of striated muscle contraction. Tn consists of three components: Tn-I which is the inhibitor of actomyosin ATPase, Tn-T which contains the binding site for tropomyosin and Tn-C. The binding of calcium to Tn-C abolishes the inhibitory action of Tn on actin filaments. In Gallus gallus (Chicken), this protein is Troponin C, skeletal muscle (TNNC2).